Reading from the N-terminus, the 121-residue chain is Large ribosomal subunit protein uL18 (121 aa).

It belongs to the universal ribosomal protein uL18 family. In terms of assembly, part of the 50S ribosomal subunit; part of the 5S rRNA/L5/L18/L25 subcomplex. Contacts the 5S and 23S rRNAs.

Functionally, this is one of the proteins that bind and probably mediate the attachment of the 5S RNA into the large ribosomal subunit, where it forms part of the central protuberance. This is Large ribosomal subunit protein uL18 from Paraburkholderia phytofirmans (strain DSM 17436 / LMG 22146 / PsJN) (Burkholderia phytofirmans).